Consider the following 326-residue polypeptide: D-alanine--D-alanine ligase (326 aa).

The region spanning 112–312 is the ATP-grasp domain; it reads KRIWRFEGLP…YENLCLGILA (201 aa). 138-193 contributes to the ATP binding site; the sequence is LQALGAPMIVKPSREGSTIGLTKVWTAEECDQAYVLASRYDPEVLCEEFIEGDETT. The Mg(2+) site is built by Asp265, Glu279, and Asn281.

Belongs to the D-alanine--D-alanine ligase family. The cofactor is Mg(2+). Mn(2+) serves as cofactor.

It localises to the cytoplasm. It catalyses the reaction 2 D-alanine + ATP = D-alanyl-D-alanine + ADP + phosphate + H(+). The protein operates within cell wall biogenesis; peptidoglycan biosynthesis. Its function is as follows. Cell wall formation. This chain is D-alanine--D-alanine ligase, found in Delftia acidovorans (strain DSM 14801 / SPH-1).